We begin with the raw amino-acid sequence, 438 residues long: Protein DAY-LENGTH-DEPENDENT DELAYED-GREENING 1, chloroplastic (438 aa).

A chloroplast-targeting transit peptide spans M1–P54. The next 4 membrane-spanning stretches (helical) occupy residues F216–L236, A314–A334, A359–E379, and I398–F418.

Belongs to the CemA family.

Its subcellular location is the plastid. The protein resides in the chloroplast envelope. It is found in the chloroplast membrane. It carries out the reaction K(+)(in) + H(+)(out) = K(+)(out) + H(+)(in). The catalysed reaction is Ca(2+)(in) + H(+)(out) = Ca(2+)(out) + H(+)(in). Promotes K(+)/H(+) antiport activity supporting K(+) efflux to control H(+) homeostasis in chloroplasts. Also able to ensure Ca(2+)/H(+) antiport activity in vitro. Essential for chloroplast pH regulation and optimization of non-photochemical quenching (NPQ), a regulatory mechanism that dissipates excess light energy; acts downstream of PSBS but independently from PGR5 and FLAP1. This is Protein DAY-LENGTH-DEPENDENT DELAYED-GREENING 1, chloroplastic from Arabidopsis thaliana (Mouse-ear cress).